The chain runs to 385 residues: ATP phosphoribosyltransferase regulatory subunit (385 aa).

It belongs to the class-II aminoacyl-tRNA synthetase family. HisZ subfamily. Heteromultimer composed of HisG and HisZ subunits.

It is found in the cytoplasm. It functions in the pathway amino-acid biosynthesis; L-histidine biosynthesis; L-histidine from 5-phospho-alpha-D-ribose 1-diphosphate: step 1/9. In terms of biological role, required for the first step of histidine biosynthesis. May allow the feedback regulation of ATP phosphoribosyltransferase activity by histidine. This is ATP phosphoribosyltransferase regulatory subunit from Bordetella pertussis (strain Tohama I / ATCC BAA-589 / NCTC 13251).